Here is a 526-residue protein sequence, read N- to C-terminus: Organic cation/carnitine transporter 4 (526 aa).

Topologically, residues 1 to 52 are cytoplasmic; it reads MESPEDRNGNDVRQPLLEKIPVKKEAEGEERLCIDEMLQRYCGEFGRWQLKH. Residues 53–73 traverse the membrane as a helical segment; it reads FVLTCIAWALEAFHTMVMIFA. Topologically, residues 74–123 are extracellular; sequence DQEPEWRCVGSDCRVGSLNCELDPSSWEWTAGKGSSTVSEWGLICGDKYK. The helical transmembrane segment at 124–144 threads the bilayer; that stretch reads VGLVQALFFAGCMIGAGVFGH. Residues 145–153 lie on the Cytoplasmic side of the membrane; that stretch reads LSDSKLGRK. A helical membrane pass occupies residues 154–174; the sequence is GSLTVVCIINAIFGIATAFSP. The Extracellular segment spans residues 175-179; the sequence is NYWTY. The helical transmembrane segment at 180-200 threads the bilayer; the sequence is VVLRFLTGFSTGGVGLTAFVL. 201–208 serves as a coordination point for ATP; it reads ATEPIGPS. Residues 201-214 are Cytoplasmic-facing; it reads ATEPIGPSKRGVAG. The helical transmembrane segment at 215–235 threads the bilayer; the sequence is MSTFYFFSAGIAVLSGIAYVF. Topologically, residues 236–240 are extracellular; the sequence is RSWRE. Residues 241–261 traverse the membrane as a helical segment; that stretch reads LFIVSSLPSLLFLLIVIPFIS. The Cytoplasmic segment spans residues 262–331; sequence ESPRWYLVRG…ILSPLMRMRL (70 aa). The helical transmembrane segment at 332 to 352 threads the bilayer; sequence VISVAISFTVSIVYYGLSLNV. Residues 353–360 are Extracellular-facing; sequence GNLKTNLY. Residues 361–381 traverse the membrane as a helical segment; sequence LNVFVNAVSEMPAFAITAVLL. Residues 382–390 lie on the Cytoplasmic side of the membrane; that stretch reads DKYGRKPLS. A helical membrane pass occupies residues 391 to 411; it reads IGTQWFSCVFCLVGFSVWGAG. Residues 412 to 418 are Extracellular-facing; it reads PWKSVRM. Residues 419-439 traverse the membrane as a helical segment; it reads VSGVLGIFGMAGTYNLLFIYI. Residues 440-451 are Cytoplasmic-facing; it reads AELFPTVVRNAA. The helical transmembrane segment at 452 to 472 threads the bilayer; the sequence is LGCATQAAQMGAILAPFVVVL. At 473–475 the chain is on the extracellular side; that stretch reads GEE. The helical transmembrane segment at 476–496 threads the bilayer; it reads LPFGVFAVCGLVGGGLAFYLP. Residues 497-526 are Cytoplasmic-facing; sequence ETLNKPLYDTMFGMHEAESESNRERGEVIC.

The protein belongs to the major facilitator (TC 2.A.1) superfamily. Organic cation transporter (TC 2.A.1.19) family. In terms of tissue distribution, mostly expressed in siliques, and, to a lower extent, in stems, leaves, flowers and siliques. Present in pollen. In the stems of secondary inflorescences present in the phloem cells and xylem parenchyma cells.

It is found in the vacuole membrane. Its function is as follows. High affinity carnitine transporter involved in the active cellular uptake of carnitine. Also transports organic cations. This Arabidopsis thaliana (Mouse-ear cress) protein is Organic cation/carnitine transporter 4 (OCT4).